The primary structure comprises 461 residues: Elongation factor 1-alpha (461 aa).

A tr-type G domain is found at Lys-5 to Thr-242. The G1 stretch occupies residues Gly-14–Ser-21. Gly-14–Ser-21 lines the GTP pocket. A G2 region spans residues Gly-70 to Asp-74. The tract at residues Asp-91–Gly-94 is G3. GTP-binding positions include Asp-91–His-95 and Asn-153–Asp-156. The interval Asn-153–Asp-156 is G4. Residues Ser-194 to Trp-196 are G5. Glu-301 and Glu-374 each carry 5-glutamyl glycerylphosphorylethanolamine.

The protein belongs to the TRAFAC class translation factor GTPase superfamily. Classic translation factor GTPase family. EF-Tu/EF-1A subfamily.

Its subcellular location is the cytoplasm. This protein promotes the GTP-dependent binding of aminoacyl-tRNA to the A-site of ribosomes during protein biosynthesis. The sequence is that of Elongation factor 1-alpha from Apis mellifera (Honeybee).